Consider the following 103-residue polypeptide: Regulator of rDNA transcription protein 1 (103 aa).

The next 2 membrane-spanning stretches (helical) occupy residues 9–33 and 40–57; these read FLPS…WVLV and VAFI…YTFF.

The protein localises to the membrane. In terms of biological role, identified in a screen for mutants with decreased levels of rDNA transcription. This chain is Regulator of rDNA transcription protein 1 (RRT1), found in Saccharomyces cerevisiae (strain ATCC 204508 / S288c) (Baker's yeast).